A 2282-amino-acid polypeptide reads, in one-letter code: Cation channel sperm-associated targeting subunit tau (2282 aa).

The interval 1–118 is disordered; sequence MELPPPGNRR…RGKGKGTGTR (118 aa). 2 stretches are compositionally biased toward polar residues: residues 11–41 and 50–87; these read VSIN…SLKR and MMSN…NLSS. Residues 90–109 show a composition bias toward basic and acidic residues; sequence YADEEGKPLTDKNKDKDKGR. In terms of domain architecture, C2 spans 131 to 266; sequence QSDEMAIANQ…IQKGCFTEVM (136 aa). Disordered stretches follow at residues 397-416, 656-679, 747-1066, 1104-1153, 1217-1240, 1426-1445, 1452-1515, 1542-1569, 1908-1928, and 2187-2222; these read MTKR…SSAL, EHED…TWAE, NKLI…SHDP, SAKS…DKQS, YTND…TDDR, NSLL…DSRS, RQNT…SLDK, ERRQ…LEKT, NQAN…LKKQ, and PKKS…EPNK. 5 stretches are compositionally biased toward polar residues: residues 750–760, 783–792, 800–841, 849–858, and 953–974; these read ITDSSFNTTKP, SDPSSNTTKP, DPSS…SDLN, IVSTISSDPN, and SARS…TKLS. Residues 1104 to 1123 show a composition bias toward low complexity; it reads SAKSLDSNNSSASSSPTVNS. Residues 1124–1136 are compositionally biased toward polar residues; sequence DTTTNAAEPSGTK. Composition is skewed to polar residues over residues 1452 to 1466 and 1473 to 1482; these read RQNT…SSVS and DCQSISTQES. The segment covering 1484 to 1493 has biased composition (basic and acidic residues); that stretch reads YPVRDTKSDS. Residues 1495–1504 are compositionally biased toward acidic residues; the sequence is NDTEEMELDS. Basic and acidic residues-rich tracts occupy residues 1542–1555 and 1916–1925; these read ERRQ…ESLI and SPERPSDISL.

As to quaternary structure, component of the CatSper complex or CatSpermasome composed of the core pore-forming members CATSPER1, CATSPER2, CATSPER3 and CATSPER4 as well as auxiliary members CATSPERB, CATSPERG, CATSPERD, CATSPERE, CATSPERZ, C2CD6/CATSPERT, SLCO6C1, TMEM249, TMEM262 and EFCAB9. HSPA1 may be an additional auxiliary complex member. The core complex members CATSPER1, CATSPER2, CATSPER3 and CATSPER4 form a heterotetrameric channel. The auxiliary CATSPERB, CATSPERG, CATSPERD and CATSPERE subunits form a pavilion-like structure over the pore which stabilizes the complex through interactions with CATSPER4, CATSPER3, CATSPER1 and CATSPER2 respectively. SLCO6C1 interacts with CATSPERE and TMEM262/CATSPERH interacts with CATSPERB, further stabilizing the complex. C2CD6/CATSPERT interacts at least with CATSPERD and is required for targeting the CatSper complex in the flagellar membrane. Expressed in cauda sperm (at protein level).

It localises to the cell projection. The protein resides in the cilium. Its subcellular location is the flagellum membrane. Functionally, auxiliary component of the CatSper complex, a complex involved in sperm cell hyperactivation. Sperm cell hyperactivation is needed for sperm motility which is essential late in the preparation of sperm for fertilization. Required for CatSper complex targeting and trafficking into the quadrilinear nanodomains. Targets the preassembled CatSper complexes to elongating flagella, where it links the channel-carrying vesicles and motor proteins. The polypeptide is Cation channel sperm-associated targeting subunit tau (Mus musculus (Mouse)).